The following is a 912-amino-acid chain: Collagen alpha-2(I) chain (912 aa).

Positions 1–41 are enriched in low complexity; that stretch reads GPMGIMGPRGPPGASGAPGPQGFQGPAGEPGEPGQTGPAGA. Disordered stretches follow at residues 1–206, 222–739, and 763–912; these read GPMG…GITG, IPGP…GIIG, and GPPG…RGSQ. Positions 43–57 are enriched in basic and acidic residues; sequence AGEDGHPGKPGRPGE. Composition is skewed to low complexity over residues 124 to 153, 178 to 192, 229 to 244, 295 to 327, 360 to 382, and 406 to 424; these read VGAP…SAGP, AGPR…ISGP, PGPA…RGIV, PGIR…VRGP, PVGI…RGEP, and AGIA…NGAQ. Residues 431–440 are compositionally biased toward gly residues; it reads GVQGGKGEQG. Composition is skewed to low complexity over residues 474-501 and 517-532; these read IPGP…SRGP and IGAP…SGIP. The segment covering 539–548 has biased composition (gly residues); it reads GIPGGKGEIG. 2 stretches are compositionally biased toward low complexity: residues 549-612 and 622-637; these read NPGR…QPGA and NGPV…AGPS. The segment covering 647–656 has biased composition (gly residues); it reads GSRGDGGPPG. 5 stretches are compositionally biased toward low complexity: residues 658 to 667, 728 to 739, 763 to 785, 805 to 815, and 830 to 850; these read TGFPGAAGRT, PQGIIGAPGIIG, GPPG…APGE, NAGPVGAVGAP, and PGPV…PSGP.

The protein belongs to the fibrillar collagen family. In terms of assembly, trimers of one alpha 2(I) and two alpha 1(I) chains. Interacts (via C-terminus) with TMEM131 (via PapD-L domain); the interaction is direct and is involved in assembly and TRAPPIII ER-to-Golgi transport complex-dependent secretion of collagen. Post-translationally, prolines at the third position of the tripeptide repeating unit (G-X-Y) are hydroxylated in some or all of the chains. Forms the fibrils of tendon, ligaments and bones. In bones, the fibrils are mineralized with calcium hydroxyapatite.

It localises to the secreted. The protein localises to the extracellular space. It is found in the extracellular matrix. Type I collagen is a member of group I collagen (fibrillar forming collagen). The sequence is that of Collagen alpha-2(I) chain from Equus sp.